The following is a 560-amino-acid chain: DNA ligase B (560 aa).

The N6-AMP-lysine intermediate role is filled by Lys124.

Belongs to the NAD-dependent DNA ligase family. LigB subfamily.

It carries out the reaction NAD(+) + (deoxyribonucleotide)n-3'-hydroxyl + 5'-phospho-(deoxyribonucleotide)m = (deoxyribonucleotide)n+m + AMP + beta-nicotinamide D-nucleotide.. In terms of biological role, catalyzes the formation of phosphodiester linkages between 5'-phosphoryl and 3'-hydroxyl groups in double-stranded DNA using NAD as a coenzyme and as the energy source for the reaction. In Escherichia coli O9:H4 (strain HS), this protein is DNA ligase B.